A 367-amino-acid chain; its full sequence is uncharacterized protein (367 aa).

A helical membrane pass occupies residues 6–26 (IAAGVVVALAAVWCTSAWFTG).

The protein to E.coli YdgA and YihF.

The protein localises to the membrane. This is an uncharacterized protein from Haemophilus influenzae (strain ATCC 51907 / DSM 11121 / KW20 / Rd).